A 224-amino-acid chain; its full sequence is Deoxyribose-phosphate aldolase (224 aa).

Asp92 acts as the Proton donor/acceptor in catalysis. Lys154 acts as the Schiff-base intermediate with acetaldehyde in catalysis. The Proton donor/acceptor role is filled by Lys183.

This sequence belongs to the DeoC/FbaB aldolase family. DeoC type 1 subfamily.

The protein localises to the cytoplasm. It catalyses the reaction 2-deoxy-D-ribose 5-phosphate = D-glyceraldehyde 3-phosphate + acetaldehyde. The protein operates within carbohydrate degradation; 2-deoxy-D-ribose 1-phosphate degradation; D-glyceraldehyde 3-phosphate and acetaldehyde from 2-deoxy-alpha-D-ribose 1-phosphate: step 2/2. Catalyzes a reversible aldol reaction between acetaldehyde and D-glyceraldehyde 3-phosphate to generate 2-deoxy-D-ribose 5-phosphate. This Mannheimia succiniciproducens (strain KCTC 0769BP / MBEL55E) protein is Deoxyribose-phosphate aldolase.